Here is a 106-residue protein sequence, read N- to C-terminus: Small ribosomal subunit protein bS18 (106 aa).

Residues 1–41 form a disordered region; the sequence is MAEEHSNQRSQTFNGERTNRPSRKPRGDGERRGRRQGGRRR.

It belongs to the bacterial ribosomal protein bS18 family. As to quaternary structure, part of the 30S ribosomal subunit. Forms a tight heterodimer with protein bS6.

Functionally, binds as a heterodimer with protein bS6 to the central domain of the 16S rRNA, where it helps stabilize the platform of the 30S subunit. In Oenococcus oeni (strain ATCC BAA-331 / PSU-1), this protein is Small ribosomal subunit protein bS18.